The following is a 36-amino-acid chain: Dermonecrotic toxin LgSicTox-beta-LOXN1/LOXN7 (36 aa).

It belongs to the arthropod phospholipase D family. Class II subfamily. Requires Mg(2+) as cofactor. Contains 2 disulfide bonds. As to expression, expressed by the venom gland.

The protein localises to the secreted. It carries out the reaction an N-(acyl)-sphingosylphosphocholine = an N-(acyl)-sphingosyl-1,3-cyclic phosphate + choline. The enzyme catalyses an N-(acyl)-sphingosylphosphoethanolamine = an N-(acyl)-sphingosyl-1,3-cyclic phosphate + ethanolamine. The catalysed reaction is a 1-acyl-sn-glycero-3-phosphocholine = a 1-acyl-sn-glycero-2,3-cyclic phosphate + choline. It catalyses the reaction a 1-acyl-sn-glycero-3-phosphoethanolamine = a 1-acyl-sn-glycero-2,3-cyclic phosphate + ethanolamine. Its function is as follows. Dermonecrotic toxins cleave the phosphodiester linkage between the phosphate and headgroup of certain phospholipids (sphingolipid and lysolipid substrates), forming an alcohol (often choline) and a cyclic phosphate. This toxin acts on sphingomyelin (SM). It may also act on ceramide phosphoethanolamine (CPE), lysophosphatidylcholine (LPC) and lysophosphatidylethanolamine (LPE), but not on lysophosphatidylserine (LPS), and lysophosphatidylglycerol (LPG). It acts by transphosphatidylation, releasing exclusively cyclic phosphate products as second products. Induces dermonecrosis, hemolysis, increased vascular permeability, edema, inflammatory response, and platelet aggregation. The sequence is that of Dermonecrotic toxin LgSicTox-beta-LOXN1/LOXN7 from Loxosceles gaucho (Spider).